A 130-amino-acid chain; its full sequence is Small ribosomal subunit protein uS8 (130 aa).

It belongs to the universal ribosomal protein uS8 family. In terms of assembly, part of the 30S ribosomal subunit. Contacts proteins S5 and S12.

In terms of biological role, one of the primary rRNA binding proteins, it binds directly to 16S rRNA central domain where it helps coordinate assembly of the platform of the 30S subunit. This Pseudomonas fluorescens (strain SBW25) protein is Small ribosomal subunit protein uS8.